Here is a 577-residue protein sequence, read N- to C-terminus: Proline--tRNA ligase (577 aa).

The protein belongs to the class-II aminoacyl-tRNA synthetase family. ProS type 1 subfamily. Homodimer.

The protein localises to the cytoplasm. The catalysed reaction is tRNA(Pro) + L-proline + ATP = L-prolyl-tRNA(Pro) + AMP + diphosphate. Catalyzes the attachment of proline to tRNA(Pro) in a two-step reaction: proline is first activated by ATP to form Pro-AMP and then transferred to the acceptor end of tRNA(Pro). As ProRS can inadvertently accommodate and process non-cognate amino acids such as alanine and cysteine, to avoid such errors it has two additional distinct editing activities against alanine. One activity is designated as 'pretransfer' editing and involves the tRNA(Pro)-independent hydrolysis of activated Ala-AMP. The other activity is designated 'posttransfer' editing and involves deacylation of mischarged Ala-tRNA(Pro). The misacylated Cys-tRNA(Pro) is not edited by ProRS. This is Proline--tRNA ligase from Chlamydia caviae (strain ATCC VR-813 / DSM 19441 / 03DC25 / GPIC) (Chlamydophila caviae).